The following is a 505-amino-acid chain: MEEIQGYLQLDRSQQHGFLYPLIFQEYIYALAHDHSLNRSILLENPVYDNKSSFLIVKRLITRIYQQNHFIIFANNSNQNLFFGHNKNLYSQTISEGLAFIVEIPFYIRLISSQGGKGILKFRNLRSIHSPFPFLENNFSHLNSVLDILIPHPVHLEILVQNLRYWVKDASSLHLLRFFFHEYWNWNTLIDRKKPSFDFSPKRNQKLFFLLYNSHVCEYESIFFFLRKQSSHLRSTSFGVFLERIYFYEKKERLVEVFAKDFQASLWLFKDPFIHYVRYQGKSILVSNGTPLLMNKWKSYLVNFWQCHFGIWFHPGRVYINQLPNYSFNFMGYLSSVRLNHSMVRSQMLENAFLINNAIKKFDTLVPLIPLIGSLAKAKFCNLLGHPISKPIWTDLADSDIIDRFWHICRNLSHYYSGSSKKKSLYRIKYILRLSCAKTLARKHKSTVRAFLKGLGSEFLEKFLTSEEEALSLTFSRTSSTFRGVYRNRIWYLDIIYINDLTNYQ.

Belongs to the intron maturase 2 family. MatK subfamily.

The protein localises to the plastid. It is found in the chloroplast. Usually encoded in the trnK tRNA gene intron. Probably assists in splicing its own and other chloroplast group II introns. In Coffea arabica (Arabian coffee), this protein is Maturase K.